The chain runs to 7968 residues: Obscurin (7968 aa).

5 Ig-like domains span residues 10-100 (PRFL…LQVD), 110-202 (PHFL…LVVD), 236-322 (PASP…QTYS), 331-414 (PAVP…RTVA), and 420-508 (GNLL…VSAP). A disulfide bridge connects residues Cys31 and Cys82. The disordered stretch occupies residues 228–249 (EAMRAEGAPASPPSTGTRTCTV). The segment covering 240–249 (PSTGTRTCTV) has biased composition (polar residues). 2 disulfide bridges follow: Cys259–Cys311 and Cys354–Cys404. Phosphoserine is present on Ser395. Residues 515-612 (PPVDPVVKAR…FPGTVHLAPK (98 aa)) form the Fibronectin type-III 1 domain. 12 Ig-like domains span residues 619–698 (LKAV…MEVR), 701–790 (PGLT…YQLS), 798–884 (LHKD…LRVS), 886–977 (PKVV…DVKE), 978–1066 (PKVV…FRLH), 1070–1161 (PKMM…HITE), 1162–1252 (PKGV…LHIT), 1254–1345 (PKAV…DVSE), 1346–1432 (PKAV…LSFS), 1438–1524 (PKVV…LSFH), 1530–1621 (PKAV…HVAE), and 1622–1719 (PKVV…PQIS). Cystine bridges form between Cys819–Cys870, Cys912–Cys962, Cys1004–Cys1054, Cys1096–Cys1146, Cys1188–Cys1238, Cys1280–Cys1330, Cys1372–Cys1422, Cys1464–Cys1514, Cys1556–Cys1606, Cys1648–Cys1698, Cys1723–Cys1791, and Cys1830–Cys1880. In terms of domain architecture, Fibronectin type-III 2 spans 1731 to 1808 (KEHEDIILTA…DFPVQVEEVA (78 aa)). 29 consecutive Ig-like domains span residues 1809-1894 (AKFC…LTVS), 1896-1982 (PRVV…AALR), 1987-2071 (PVLF…AKLT), 2077-2162 (VRLV…LVVT), 2165-2249 (PVSF…ASVK), 2289-2380 (PVTL…QSIT), 2468-2559 (PVVL…REVT), 2564-2643 (LQDA…LEVR), 2646-2730 (PVVF…ARVR), 2736-2823 (VGIT…LIVR), 2826-2908 (PAAI…STAS), 2920-2999 (EELT…AQLL), 3003-3092 (RRVH…LRVT), 3095-3183 (PSVF…VHAR), 3184-3268 (PVRF…ATLT), 3273-3356 (PAQF…ASLT), 3359-3444 (PMPA…ATLT), 3449-3532 (PAKF…ATLT), 3537-3620 (PARF…AMLT), 3625-3708 (PIKF…AMLT), 3713-3796 (PSKF…ATLT), 3801-3884 (PARF…ATLT), 3890-3973 (PVFR…ATLT), 3978-4062 (PVRF…ASLS), 4068-4160 (PKFK…PEVT), 4171-4239 (TADE…NHAS), 4248-4337 (PEVT…LKVT), 4340-4427 (NTVV…FLTV), and 4430-4518 (WRLE…ARLT). 3 disulfides stabilise this stretch: Cys2187-Cys2237, Cys2311-Cys2361, and Cys2490-Cys2540. A disulfide bond links Cys2668 and Cys2718. Cystine bridges form between Cys2848–Cys2898 and Cys2937–Cys2987. Ser2889 carries the phosphoserine modification. Cystine bridges form between Cys3117/Cys3167, Cys3206/Cys3256, Cys3295/Cys3344, Cys3383/Cys3432, Cys3471/Cys3520, Cys3559/Cys3608, Cys3647/Cys3696, Cys3735/Cys3784, Cys3823/Cys3872, Cys3911/Cys3961, Cys4000/Cys4050, and Cys4089/Cys4141. Ser4015 bears the Phosphoserine mark. The cysteines at positions 4453 and 4508 are disulfide-linked. Residues 4525 to 4619 (PPEDAEVVAR…LPQTVRLAEP (95 aa)) enclose the Fibronectin type-III 3 domain. The 91-residue stretch at 4624 to 4714 (PPQPSAPESR…AAATFQVALS (91 aa)) folds into the Ig-like 47 domain. Positions 4749-4785 (MSREPTLDSISELPEEDGRSQRLPQEAEEVAPDLSEG) are disordered. Ser4750 is modified (phosphoserine). Residue Thr4754 is modified to Phosphothreonine. Ser4757 carries the post-translational modification Phosphoserine. Thr4788 carries the phosphothreonine modification. The residue at position 4805 (Ser4805) is a Phosphoserine. Residues 4820-4860 (LKKAGRPGTSPLASKVGAPAAPSVKPQQQQEPLAAVRPPLG) are disordered. One can recognise an IQ domain in the interval 4872-4901 (MDKAAVKIQAAFKGYKVRKEMKQQEGPMFS). 2 consecutive Ig-like domains span residues 4898 to 4989 (PMFS…VVVS) and 5126 to 5215 (PVFL…AELR). Intrachain disulfides connect Cys4919/Cys4971 and Cys5147/Cys5199. Over residues 5238-5256 (AQGYLSSREQEGTESTTDE) the composition is skewed to polar residues. A disordered region spans residues 5238-5257 (AQGYLSSREQEGTESTTDEG). Ig-like domains are found at residues 5260 to 5349 (PQVV…ARLL) and 5371 to 5467 (PRML…LHVS). The segment at 5554 to 5596 (AKLQVPGGDSDEDSKTPSASPRHGRSRPSSSIQESSSESEDGD) is disordered. Ser5563 is subject to Phosphoserine. Position 5569 is a phosphothreonine (Thr5569). A compositionally biased stretch (low complexity) spans 5570 to 5589 (PSASPRHGRSRPSSSIQESS). Phosphoserine is present on residues Ser5571 and Ser5573. Positions 5600-5667 (EIFDIYVVTA…SPAYLDRRLK (68 aa)) constitute an SH3 domain. The DH domain occupies 5693–5877 (RLSSVIQELL…SALPQRAENK (185 aa)). The region spanning 5895–6004 (EPIRQGHFIV…WVKEICGIQQ (110 aa)) is the PH domain. Arg5975 is an a 1,2-diacyl-sn-glycero-3-phospho-(1D-myo-inositol-4,5-bisphosphate) binding site. Residue Arg5980 participates in a 1,2-diacyl-sn-glycero-3-phospho-(1D-myo-inositol-3,4-bisphosphate) binding. Ig-like domains follow at residues 6014-6097 (PDFE…GNCS) and 6108-6200 (PRFV…LRIQ). 2 cysteine pairs are disulfide-bonded: Cys6035/Cys6087 and Cys6129/Cys6182. The interval 6237-6296 (RLLGPKAPGPSTGDLTGPGPCPRGAPALQETGSQPPVTGTSEAPAVPPRVPQPLLHEGPE) is disordered. A compositionally biased stretch (polar residues) spans 6266–6277 (ETGSQPPVTGTS). The Ig-like 54 domain occupies 6357-6445 (PSMQVTIEDV…GQVLCKAELL (89 aa)). One can recognise a Protein kinase 1 domain in the interval 6468–6721 (YEVKEEIGRG…AAQCLSHPWF (254 aa)). Residues 6474–6482 (IGRGVFGFV) and Lys6497 each bind ATP. The active-site Proton acceptor is the Asp6587. 3 disordered regions span residues 6777 to 6863 (GVAR…AQGC), 6952 to 7176 (SGTH…TMRK), and 7217 to 7272 (VSQS…TPWE). Residue Ser6831 is modified to Phosphoserine. The span at 7052–7061 (AVAPCPPGSF) shows a compositional bias: pro residues. Residues 7115–7139 (SSPGSASQASSSQVSSLRVGSSQVG) show a composition bias toward low complexity. Residues 7160–7172 (DSTPTLQRPQEQA) are compositionally biased toward polar residues. A compositionally biased stretch (basic and acidic residues) spans 7227–7242 (EARAESQSEEQQEARA). At Ser7244 the chain carries Phosphoserine. Residues 7463 to 7552 (PTFLRELSDE…GTVTTTGVLR (90 aa)) form the Ig-like 55 domain. Cysteines 7484 and 7536 form a disulfide. One can recognise a Fibronectin type-III 4 domain in the interval 7557–7649 (PSSSPCPDIG…PSEQVLLGGP (93 aa)). The 253-residue stretch at 7672 to 7924 (FAFQTQIQRG…ASSCLQCPWL (253 aa)) folds into the Protein kinase 2 domain. Residues 7678–7686 (IQRGRFSVV) and Lys7701 each bind ATP. Asp7791 (proton acceptor) is an active-site residue.

It belongs to the protein kinase superfamily. CAMK Ser/Thr protein kinase family. In terms of assembly, interacts (via protein kinase domain 2) with CDH2 and (via protein kinase domain 1) with ATP1B1. Isoform 3 interacts with TTN/titin and calmodulin. Isoform 3 interacts with ANK1 isoform Mu17/ank1.5. The cofactor is Mg(2+). In terms of processing, autophosphorylated by protein kinase domains 1 and 2.

It localises to the cytoplasm. Its subcellular location is the myofibril. It is found in the sarcomere. The protein resides in the m line. The protein localises to the z line. It localises to the cell membrane. Its subcellular location is the sarcolemma. It is found in the nucleus. It catalyses the reaction L-seryl-[protein] + ATP = O-phospho-L-seryl-[protein] + ADP + H(+). It carries out the reaction L-threonyl-[protein] + ATP = O-phospho-L-threonyl-[protein] + ADP + H(+). In terms of biological role, structural component of striated muscles which plays a role in myofibrillogenesis. Probably involved in the assembly of myosin into sarcomeric A bands in striated muscle. Has serine/threonine protein kinase activity and phosphorylates N-cadherin CDH2 and sodium/potassium-transporting ATPase subunit ATP1B1. Binds (via the PH domain) strongly to phosphatidylinositol 3,4-bisphosphate (PtdIns(3,4)P2) and phosphatidylinositol 4,5-bisphosphate (PtdIns(4,5)P2), and to a lesser extent to phosphatidylinositol 3-phosphate (PtdIns(3)P), phosphatidylinositol 4-phosphate (PtdIns(4)P), phosphatidylinositol 5-phosphate (PtdIns(5)P) and phosphatidylinositol 3,4,5-trisphosphate (PtdIns(3,4,5)P3). This is Obscurin (OBSCN) from Homo sapiens (Human).